Here is a 604-residue protein sequence, read N- to C-terminus: Putative sodium-dependent multivitamin transporter (604 aa).

Transmembrane regions (helical) follow at residues 4-24, 48-68, 78-98, 134-154, 160-180, and 188-208; these read LGAWDYTILAVVLIISVAIGI, VAPVAFSLMASFMSAVTILGV, MFVVINLSYVLSTPVAAYLII, VLYMGIVVYAPALALEAVTGL, IVIVGVVCTFYATLGGMKAVL, and LLMFAAVFSVIICAWVKAGSL. 2 N-linked (GlcNAc...) asparagine glycosylation sites follow: Asn222 and Asn225. 7 consecutive transmembrane segments (helical) span residues 234 to 254, 273 to 293, 331 to 351, 389 to 409, 413 to 433, 440 to 460, and 511 to 531; these read HTWFTQILGGCATYLAIYGVN, ALWWCLPILCLLSLSTCFSGL, LAGLFVSGIFCASLSTISSII, LFFGALCIGMAFMAGSIGGLL, LSIFGIIGGPLLGLFTLGMYV, GAIGGLLISLAFCFWIGFGQP, and ALGFLITFFGGWLLSWLFALL.

The protein belongs to the sodium:solute symporter (SSF) (TC 2.A.21) family.

The protein resides in the cell membrane. This is Putative sodium-dependent multivitamin transporter from Drosophila melanogaster (Fruit fly).